The following is a 193-amino-acid chain: Ion-translocating oxidoreductase complex subunit A (193 aa).

Transmembrane regions (helical) follow at residues 5-25, 39-59, 63-83, 102-122, 134-154, and 171-191; these read LLLF…FLGL, MGMG…AWLI, ILIP…VIAV, LLGI…VALL, ALYG…FAAI, and AIAL…SGLV.

This sequence belongs to the NqrDE/RnfAE family. As to quaternary structure, the complex is composed of six subunits: RsxA, RsxB, RsxC, RsxD, RsxE and RsxG.

The protein localises to the cell inner membrane. Functionally, part of a membrane-bound complex that couples electron transfer with translocation of ions across the membrane. Required to maintain the reduced state of SoxR. The protein is Ion-translocating oxidoreductase complex subunit A of Shigella flexneri serotype 5b (strain 8401).